We begin with the raw amino-acid sequence, 505 residues long: AMP phosphorylase (505 aa).

AMP contacts are provided by residues Gly-170, 196–201, and Thr-205; that span reads SRAITS. Asp-258 acts as the Proton donor in catalysis. Residues Ser-266 and Lys-290 each contribute to the AMP site.

It belongs to the thymidine/pyrimidine-nucleoside phosphorylase family. Type 2 subfamily.

It catalyses the reaction AMP + phosphate = alpha-D-ribose 1,5-bisphosphate + adenine. It carries out the reaction CMP + phosphate = cytosine + alpha-D-ribose 1,5-bisphosphate. The catalysed reaction is UMP + phosphate = alpha-D-ribose 1,5-bisphosphate + uracil. Its function is as follows. Catalyzes the conversion of AMP and phosphate to adenine and ribose 1,5-bisphosphate (R15P). Exhibits phosphorylase activity toward CMP and UMP in addition to AMP. Functions in an archaeal AMP degradation pathway, together with R15P isomerase and RubisCO. The sequence is that of AMP phosphorylase from Methanococcus vannielii (strain ATCC 35089 / DSM 1224 / JCM 13029 / OCM 148 / SB).